The primary structure comprises 152 residues: Small ribosomal subunit protein uS13 (152 aa).

Belongs to the universal ribosomal protein uS13 family.

The protein localises to the cytoplasm. Its function is as follows. Located at the top of the head of the 40S subunit, it contacts several helices of the 18S rRNA. The sequence is that of Small ribosomal subunit protein uS13 (RPS18) from Branchiostoma belcheri (Amphioxus).